The primary structure comprises 106 residues: Large ribosomal subunit protein bL21 (106 aa).

The protein belongs to the bacterial ribosomal protein bL21 family. As to quaternary structure, part of the 50S ribosomal subunit. Contacts protein L20.

Functionally, this protein binds to 23S rRNA in the presence of protein L20. This is Large ribosomal subunit protein bL21 from Xylella fastidiosa (strain Temecula1 / ATCC 700964).